We begin with the raw amino-acid sequence, 560 residues long: Eukaryotic translation initiation factor 3 subunit D-1 (560 aa).

The interval 98–166 is disordered; the sequence is VQKPPHQRGR…RGPPPKMRES (69 aa). The segment covering 100-121 has biased composition (basic residues); it reads KPPHQRGRFRNMRNSRSGRGRN. Thr-128 carries the phosphothreonine modification. Over residues 147-156 the composition is skewed to basic residues; the sequence is GRGMGKKFGH. The tract at residues 291 to 305 is RNA gate; that stretch reads EFDLLTVNESSVEPP.

Belongs to the eIF-3 subunit D family. In terms of assembly, component of the eukaryotic translation initiation factor 3 (eIF-3) complex. The eIF-3 complex interacts with pix.

Its subcellular location is the cytoplasm. MRNA cap-binding component of the eukaryotic translation initiation factor 3 (eIF-3) complex, which is involved in protein synthesis of a specialized repertoire of mRNAs and, together with other initiation factors, stimulates binding of mRNA and methionyl-tRNAi to the 40S ribosome. The eIF-3 complex specifically targets and initiates translation of a subset of mRNAs involved in cell proliferation. In the eIF-3 complex, eif3d specifically recognizes and binds the 7-methylguanosine cap of a subset of mRNAs. This is Eukaryotic translation initiation factor 3 subunit D-1 from Drosophila melanogaster (Fruit fly).